Here is a 485-residue protein sequence, read N- to C-terminus: MFAHTALRQRCAKWLFATGLFLLLGACVEKPSTLERVKEDGVLRVITRNSPATYFQDRNGETGFEYELVKRFADDLGVKLEIETADNLDELFDDLGKPSGPVLAAAGLVNSERRKTQARFSHPYLEVTPQVIYRNGRSRPTDPKGLVGKKIMVLKGSSHADQLAELKRRYPGLEYEESDAVEVVDLLRMVDEGQIDLTLVDSNELAMNQVYFPNVRVAFDLGETRNQRWAVAPGEDNSLLNEVNEFLDKSQKNGTLQRLKDRYYGHVDVLGYVGAYTFAQHLQQRLPKYEKYFKSYAKVEQVDWRLLAAIGYQESLWQPEVTSKTGVRGLMMLTQRTAQAMGVSNRLDPRQSIKGGAKYFMLVKQQLDDSIKEPDRTWFALAAYNVGSGHLEDARTLAKREKLNPNKWLDVKKMLPRLSQKQWYRQTKYGYARGGEPVHFVANIRRYYDILTWVTQPQLEGQVAEGNLHVPGVNKDKPAEQSPPM.

An N-terminal signal peptide occupies residues 1–29 (MFAHTALRQRCAKWLFATGLFLLLGACVE). The segment at 30-267 (KPSTLERVKE…RLKDRYYGHV (238 aa)) is non-LT domain. Residues 268-485 (DVLGYVGAYT…DKPAEQSPPM (218 aa)) are LT domain. Glutamate 314 is a catalytic residue. The segment at 465 to 485 (EGNLHVPGVNKDKPAEQSPPM) is disordered.

In the N-terminal section; belongs to the bacterial solute-binding protein 3 family. It in the C-terminal section; belongs to the transglycosylase Slt family.

The protein localises to the cell outer membrane. It carries out the reaction Exolytic cleavage of the (1-&gt;4)-beta-glycosidic linkage between N-acetylmuramic acid (MurNAc) and N-acetylglucosamine (GlcNAc) residues in peptidoglycan, from either the reducing or the non-reducing ends of the peptidoglycan chains, with concomitant formation of a 1,6-anhydrobond in the MurNAc residue.. Its function is as follows. Murein-degrading enzyme that degrades murein glycan strands and insoluble, high-molecular weight murein sacculi, with the concomitant formation of a 1,6-anhydromuramoyl product. Lytic transglycosylases (LTs) play an integral role in the metabolism of the peptidoglycan (PG) sacculus. Their lytic action creates space within the PG sacculus to allow for its expansion as well as for the insertion of various structures such as secretion systems and flagella. The chain is Membrane-bound lytic murein transglycosylase F from Pseudomonas putida (strain W619).